We begin with the raw amino-acid sequence, 73 residues long: Large ribosomal subunit protein bL28 (73 aa).

Belongs to the bacterial ribosomal protein bL28 family.

The chain is Large ribosomal subunit protein bL28 from Anaeromyxobacter dehalogenans (strain 2CP-1 / ATCC BAA-258).